Consider the following 125-residue polypeptide: uncharacterized protein (125 aa).

The chain crosses the membrane as a helical span at residues 10–26 (IIILVCLMFLAIMVYIY).

The protein localises to the membrane. This is an uncharacterized protein from Rickettsia prowazekii (strain Madrid E).